We begin with the raw amino-acid sequence, 159 residues long: Nucleotide-binding protein PSPA7_4966 (159 aa).

Belongs to the YajQ family.

Functionally, nucleotide-binding protein. The protein is Nucleotide-binding protein PSPA7_4966 of Pseudomonas paraeruginosa (strain DSM 24068 / PA7) (Pseudomonas aeruginosa (strain PA7)).